The primary structure comprises 152 residues: Nucleoside diphosphate kinase A (152 aa).

Residues Lys12, Phe60, Arg88, and Thr94 each contribute to the ATP site. A Glycyl lysine isopeptide (Lys-Gly) (interchain with G-Cter in ubiquitin) cross-link involves residue Lys100. ATP-binding residues include Arg105 and Asn115. The active-site Pros-phosphohistidine intermediate is His118. Phosphoserine occurs at positions 120, 122, and 125.

Belongs to the NDK family. As to quaternary structure, hexamer of two different chains: An and B (A6, A5B, A4B2, A3B3, A2B4, AB5, B6). Interacts with PRUNE1. Component of the SET complex, composed of at least ANP32A, APEX1, HMGB2, NME1, SET and TREX1. Within this complex, interacts directly with SET. Also interacts with TREX1, but only following translocation to the nucleus. The cofactor is Mg(2+).

It localises to the cytoplasm. It is found in the nucleus. The catalysed reaction is a 2'-deoxyribonucleoside 5'-diphosphate + ATP = a 2'-deoxyribonucleoside 5'-triphosphate + ADP. It carries out the reaction a ribonucleoside 5'-diphosphate + ATP = a ribonucleoside 5'-triphosphate + ADP. Autophosphorylation at His-118 increases serine/threonine protein kinase activity of the enzyme. Interaction with the SET complex inhibits exonuclease activity. Major role in the synthesis of nucleoside triphosphates other than ATP. The ATP gamma phosphate is transferred to the NDP beta phosphate via a ping-pong mechanism, using a phosphorylated active-site intermediate. Possesses nucleoside-diphosphate kinase, serine/threonine-specific protein kinase, geranyl and farnesyl pyrophosphate kinase, histidine protein kinase and 3'-5' exonuclease activities. Involved in cell proliferation, differentiation and development, signal transduction, G protein-coupled receptor endocytosis, and gene expression. Required for neural development including neural patterning and cell fate determination. During GZMA-mediated cell death, works in concert with TREX1. NME1 nicks one strand of DNA and TREX1 removes bases from the free 3' end to enhance DNA damage and prevent DNA end reannealing and rapid repair. This Rattus norvegicus (Rat) protein is Nucleoside diphosphate kinase A (Nme1).